The following is a 263-amino-acid chain: Small ribosomal subunit protein eS4, Y isoform 1 (263 aa).

The 63-residue stretch at 42 to 104 (LPLIIFLRNR…TGEHFRLVYD (63 aa)) folds into the S4 RNA-binding domain.

The protein belongs to the eukaryotic ribosomal protein eS4 family.

This is Small ribosomal subunit protein eS4, Y isoform 1 (RPS4Y1) from Macaca fuscata fuscata (Japanese macaque).